We begin with the raw amino-acid sequence, 364 residues long: Peptide chain release factor 1 (364 aa).

Glutamine 237 is modified (N5-methylglutamine).

It belongs to the prokaryotic/mitochondrial release factor family. Post-translationally, methylated by PrmC. Methylation increases the termination efficiency of RF1.

Its subcellular location is the cytoplasm. Peptide chain release factor 1 directs the termination of translation in response to the peptide chain termination codons UAG and UAA. This Mycoplasma mycoides subsp. mycoides SC (strain CCUG 32753 / NCTC 10114 / PG1) protein is Peptide chain release factor 1.